The sequence spans 355 residues: Peptide chain release factor 1 (355 aa).

Residue Gln-230 is modified to N5-methylglutamine.

Belongs to the prokaryotic/mitochondrial release factor family. Post-translationally, methylated by PrmC. Methylation increases the termination efficiency of RF1.

Its subcellular location is the cytoplasm. Its function is as follows. Peptide chain release factor 1 directs the termination of translation in response to the peptide chain termination codons UAG and UAA. This Geotalea uraniireducens (strain Rf4) (Geobacter uraniireducens) protein is Peptide chain release factor 1.